A 620-amino-acid polypeptide reads, in one-letter code: Proline--tRNA ligase (620 aa).

Belongs to the class-II aminoacyl-tRNA synthetase family. ProS type 1 subfamily. As to quaternary structure, homodimer.

It is found in the cytoplasm. The enzyme catalyses tRNA(Pro) + L-proline + ATP = L-prolyl-tRNA(Pro) + AMP + diphosphate. In terms of biological role, catalyzes the attachment of proline to tRNA(Pro) in a two-step reaction: proline is first activated by ATP to form Pro-AMP and then transferred to the acceptor end of tRNA(Pro). As ProRS can inadvertently accommodate and process non-cognate amino acids such as alanine and cysteine, to avoid such errors it has two additional distinct editing activities against alanine. One activity is designated as 'pretransfer' editing and involves the tRNA(Pro)-independent hydrolysis of activated Ala-AMP. The other activity is designated 'posttransfer' editing and involves deacylation of mischarged Ala-tRNA(Pro). The misacylated Cys-tRNA(Pro) is not edited by ProRS. The chain is Proline--tRNA ligase from Streptococcus thermophilus (strain CNRZ 1066).